A 492-amino-acid chain; its full sequence is NADH-quinone oxidoreductase subunit N (492 aa).

Helical transmembrane passes span 12–32 (LLPYAPIIAVVITVLVVMIAI), 44–64 (ISVVGLNIGLFILLGQMAGII), 76–96 (LFVIDNFAQFNMVIIFICALA), 115–135 (LYLLMLLSTVGALLMVCAQHL), 138–158 (FFMSLEMLSIPLYGMLSYTYM), 169–189 (YLVLSATASATLLMGMAFIYA), 212–232 (LILGAAMMMFGIAFKLSAAPF), 244–264 (PAPIATYLASVSKVAMMALAV), 272–292 (LLALPSVQMLLMVMATLSILL), 306–326 (LLGYSSIAHMGYVLIVIVSIG), 334–354 (SMYMAIYAFTSIGAFGVVTLM), 381–401 (TAVMTIMMLSLAGIPLTAGFI), 416–438 (WFLAAMIILGSAIGLFYYLRVLL), and 463–483 (IMVIAVTAIIVFFGVLPNSMI).

Belongs to the complex I subunit 2 family. As to quaternary structure, NDH-1 is composed of 14 different subunits. Subunits NuoA, H, J, K, L, M, N constitute the membrane sector of the complex.

It localises to the cell inner membrane. It catalyses the reaction a quinone + NADH + 5 H(+)(in) = a quinol + NAD(+) + 4 H(+)(out). NDH-1 shuttles electrons from NADH, via FMN and iron-sulfur (Fe-S) centers, to quinones in the respiratory chain. The immediate electron acceptor for the enzyme in this species is believed to be ubiquinone. Couples the redox reaction to proton translocation (for every two electrons transferred, four hydrogen ions are translocated across the cytoplasmic membrane), and thus conserves the redox energy in a proton gradient. This chain is NADH-quinone oxidoreductase subunit N, found in Psychrobacter arcticus (strain DSM 17307 / VKM B-2377 / 273-4).